We begin with the raw amino-acid sequence, 196 residues long: Endoribonuclease YbeY (196 aa).

Zn(2+) contacts are provided by H120, H124, and H130.

The protein belongs to the endoribonuclease YbeY family. Zn(2+) is required as a cofactor.

The protein resides in the cytoplasm. Single strand-specific metallo-endoribonuclease involved in late-stage 70S ribosome quality control and in maturation of the 3' terminus of the 16S rRNA. This is Endoribonuclease YbeY from Corynebacterium glutamicum (strain R).